Consider the following 238-residue polypeptide: Ribonuclease PH (238 aa).

Phosphate is bound by residues Arg-86 and 124 to 126 (GTR).

This sequence belongs to the RNase PH family. As to quaternary structure, homohexameric ring arranged as a trimer of dimers.

The enzyme catalyses tRNA(n+1) + phosphate = tRNA(n) + a ribonucleoside 5'-diphosphate. Phosphorolytic 3'-5' exoribonuclease that plays an important role in tRNA 3'-end maturation. Removes nucleotide residues following the 3'-CCA terminus of tRNAs; can also add nucleotides to the ends of RNA molecules by using nucleoside diphosphates as substrates, but this may not be physiologically important. Probably plays a role in initiation of 16S rRNA degradation (leading to ribosome degradation) during starvation. The chain is Ribonuclease PH from Cupriavidus metallidurans (strain ATCC 43123 / DSM 2839 / NBRC 102507 / CH34) (Ralstonia metallidurans).